Reading from the N-terminus, the 334-residue chain is Dihydroorotate dehydrogenase (quinone) (334 aa).

Residues 61 to 65 (AGLDK) and T85 each bind FMN. K65 lines the substrate pocket. 110–114 (NRMGF) serves as a coordination point for substrate. FMN is bound by residues N138 and N171. Residue N171 participates in substrate binding. Catalysis depends on S174, which acts as the Nucleophile. A substrate-binding site is contributed by N176. K216 and T244 together coordinate FMN. 245–246 (NT) is a substrate binding site. Residues G266, G295, and 316–317 (YT) each bind FMN.

The protein belongs to the dihydroorotate dehydrogenase family. Type 2 subfamily. As to quaternary structure, monomer. The cofactor is FMN.

It is found in the cell membrane. The enzyme catalyses (S)-dihydroorotate + a quinone = orotate + a quinol. Its pathway is pyrimidine metabolism; UMP biosynthesis via de novo pathway; orotate from (S)-dihydroorotate (quinone route): step 1/1. Functionally, catalyzes the conversion of dihydroorotate to orotate with quinone as electron acceptor. In Idiomarina loihiensis (strain ATCC BAA-735 / DSM 15497 / L2-TR), this protein is Dihydroorotate dehydrogenase (quinone).